The primary structure comprises 484 residues: Glutamate--tRNA ligase (484 aa).

A 'HIGH' region motif is present at residues 11–21 (PSPTGLLHIGN). The 'KMSKS' region motif lies at 255–259 (KLSKR). An ATP-binding site is contributed by Lys258.

This sequence belongs to the class-I aminoacyl-tRNA synthetase family. Glutamate--tRNA ligase type 1 subfamily. As to quaternary structure, monomer.

It is found in the cytoplasm. The catalysed reaction is tRNA(Glu) + L-glutamate + ATP = L-glutamyl-tRNA(Glu) + AMP + diphosphate. Its function is as follows. Catalyzes the attachment of glutamate to tRNA(Glu) in a two-step reaction: glutamate is first activated by ATP to form Glu-AMP and then transferred to the acceptor end of tRNA(Glu). This Streptococcus agalactiae serotype V (strain ATCC BAA-611 / 2603 V/R) protein is Glutamate--tRNA ligase.